The following is a 118-amino-acid chain: Small ribosomal subunit protein uS13 (118 aa).

Residues 93 to 118 (RGLPVRGQRTKTNARTRKGPRKPIRK) are disordered.

This sequence belongs to the universal ribosomal protein uS13 family. Part of the 30S ribosomal subunit. Forms a loose heterodimer with protein S19. Forms two bridges to the 50S subunit in the 70S ribosome.

Functionally, located at the top of the head of the 30S subunit, it contacts several helices of the 16S rRNA. In the 70S ribosome it contacts the 23S rRNA (bridge B1a) and protein L5 of the 50S subunit (bridge B1b), connecting the 2 subunits; these bridges are implicated in subunit movement. Contacts the tRNAs in the A and P-sites. The polypeptide is Small ribosomal subunit protein uS13 (Pseudomonas fluorescens (strain Pf0-1)).